The sequence spans 1551 residues: Serine/threonine-protein kinase MRCK gamma (1551 aa).

A Protein kinase domain is found at 71-337 (FEILKVIGRG…LDDFRNHPFF (267 aa)). ATP-binding positions include 77 to 85 (IGRGAFGEV) and Lys-100. Asp-195 serves as the catalytic Proton acceptor. Ser-216 and Ser-228 each carry phosphoserine; by autocatalysis. The residue at position 234 (Thr-234) is a Phosphothreonine; by autocatalysis. The AGC-kinase C-terminal domain occupies 338 to 408 (EGVDWERLAS…TSGSHSPESS (71 aa)). 2 coiled-coil regions span residues 406-678 (ESSS…SNWE) and 730-802 (KARR…RARG). Disordered regions lie at residues 467–486 (KASL…QDSD), 655–675 (ELAQ…ETES), 801–849 (RGPV…PEGR), and 863–886 (TANT…PRSF). Residues 655 to 674 (ELAQEQESKQRLEGERRETE) show a composition bias toward basic and acidic residues. Positions 835 to 849 (ATRHGGEPDLRPEGR) are enriched in basic and acidic residues. Residues 878–927 (SHTLRPRSFPSPTKCLRCTSLMLGLGRQGLGCDACGYFCHTTCAPQAPPC) form a Phorbol-ester/DAG-type zinc finger. Residues 947–1066 (GTAYEGFLSV…WLQVLGELQR (120 aa)) enclose the PH domain. The region spanning 1092 to 1366 (LPHTLCAAIL…RPLNPEGSLF (275 aa)) is the CNH domain. Residues 1437–1450 (ISPPTNFNHLVHVG) form the CRIB domain. The interval 1442-1551 (NFNHLVHVGP…PLSPELESSP (110 aa)) is disordered. Residues 1457-1470 (GARDKSPAPEEKGR) show a composition bias toward basic and acidic residues. A Phosphoserine modification is found at Ser-1482. Residues 1511–1533 (TSLSSESVSCPQGSLSPATSLMQ) show a composition bias toward polar residues. Residues 1540 to 1551 (SLPLSPELESSP) are compositionally biased toward low complexity.

Belongs to the protein kinase superfamily. AGC Ser/Thr protein kinase family. DMPK subfamily. As to quaternary structure, homodimer and homotetramer via the coiled coil regions. Interacts tightly with GTP-bound but not GDP-bound CDC42. Mg(2+) serves as cofactor. Expressed in heart and skeletal muscle.

The protein localises to the cytoplasm. The catalysed reaction is L-seryl-[protein] + ATP = O-phospho-L-seryl-[protein] + ADP + H(+). It carries out the reaction L-threonyl-[protein] + ATP = O-phospho-L-threonyl-[protein] + ADP + H(+). Its activity is regulated as follows. Maintained in an inactive, closed conformation by an interaction between the kinase domain and the negative autoregulatory C-terminal coiled-coil region. Agonist binding to the phorbol ester binding site disrupts this, releasing the kinase domain to allow N-terminus-mediated dimerization and kinase activation by transautophosphorylation. In terms of biological role, may act as a downstream effector of CDC42 in cytoskeletal reorganization. Contributes to the actomyosin contractility required for cell invasion, through the regulation of MYPT1 and thus MLC2 phosphorylation. The protein is Serine/threonine-protein kinase MRCK gamma of Homo sapiens (Human).